The primary structure comprises 368 residues: Ribosomal RNA large subunit methyltransferase M (368 aa).

Residues serine 192, 225–228, aspartate 244, aspartate 264, and aspartate 281 contribute to the S-adenosyl-L-methionine site; that span reads APGG. Residue lysine 310 is the Proton acceptor of the active site.

The protein belongs to the class I-like SAM-binding methyltransferase superfamily. RNA methyltransferase RlmE family. RlmM subfamily. In terms of assembly, monomer.

The protein resides in the cytoplasm. The enzyme catalyses cytidine(2498) in 23S rRNA + S-adenosyl-L-methionine = 2'-O-methylcytidine(2498) in 23S rRNA + S-adenosyl-L-homocysteine + H(+). Catalyzes the 2'-O-methylation at nucleotide C2498 in 23S rRNA. The sequence is that of Ribosomal RNA large subunit methyltransferase M from Colwellia psychrerythraea (strain 34H / ATCC BAA-681) (Vibrio psychroerythus).